The sequence spans 161 residues: MERLMIEPLTAEAFAPFGDLIDVLGPPDRLINAGLCGRHHDLARLDFDAEGRAGISLFDAQARTLPHVLDLVERHPLGSQAFLPLDGVPFLVCVAEDADGVPVRFRAFLTAPGQGVNILRNCWHGVLAPIGAPGRYAVVDRIGPGANLQEYPLPVPLLVEG.

Belongs to the ureidoglycolate lyase family. In terms of assembly, homodimer. Ni(2+) is required as a cofactor.

It catalyses the reaction (S)-ureidoglycolate = urea + glyoxylate. The protein operates within nitrogen metabolism; (S)-allantoin degradation. Catalyzes the catabolism of the allantoin degradation intermediate (S)-ureidoglycolate, generating urea and glyoxylate. Involved in the utilization of allantoin as nitrogen source. The polypeptide is Ureidoglycolate lyase (Rhodobacter capsulatus (strain ATCC BAA-309 / NBRC 16581 / SB1003)).